A 1067-amino-acid chain; its full sequence is Probable importin subunit beta-4 (1067 aa).

Residues 27-94 enclose the Importin N-terminal domain; that stretch reads ATRALETKYL…RSNLLDITLK (68 aa). HEAT repeat units lie at residues 159–196, 379–416, 420–457, 591–633, 890–927, and 1013–1050; these read KLLL…VLES, GNLP…EIPT, KHHA…GLDK, PFLE…SVET, PFTR…FSTE, and QHLG…EIAP.

Belongs to the importin beta family.

It localises to the cytoplasm. It is found in the nucleus. The protein localises to the nucleus envelope. Functionally, required for nuclear protein import, its predominant substrate seems to be ribosomal proteins. Binds to nucleoporins and the GTP-bound form of gsp1 (Ran). In Schizosaccharomyces pombe (strain 972 / ATCC 24843) (Fission yeast), this protein is Probable importin subunit beta-4 (kap123).